Here is a 406-residue protein sequence, read N- to C-terminus: GTPase Obg (406 aa).

An Obg domain is found at 1-159 (MKFVDEVSIH…RDLKLELKVL (159 aa)). Positions 127-148 (NTRFKSSTNRAPRQTTPGKPGE) are disordered. Residues 129 to 143 (RFKSSTNRAPRQTTP) are compositionally biased toward polar residues. Residues 160–334 (ADVGLLGLPN…LSQDIMRYLD (175 aa)) form the OBG-type G domain. GTP contacts are provided by residues 166-173 (GLPNAGKS), 191-195 (FTTLV), 213-216 (DIPG), 283-286 (NKMD), and 315-317 (SAL). Mg(2+)-binding residues include Ser-173 and Thr-193. The segment at 382–406 (AGAVDDDDFDDEEDDGDGPEIFYVP) is disordered. Residues 385-399 (VDDDDFDDEEDDGDG) are compositionally biased toward acidic residues.

Belongs to the TRAFAC class OBG-HflX-like GTPase superfamily. OBG GTPase family. As to quaternary structure, monomer. The cofactor is Mg(2+).

It is found in the cytoplasm. Its function is as follows. An essential GTPase which binds GTP, GDP and possibly (p)ppGpp with moderate affinity, with high nucleotide exchange rates and a fairly low GTP hydrolysis rate. Plays a role in control of the cell cycle, stress response, ribosome biogenesis and in those bacteria that undergo differentiation, in morphogenesis control. In Pseudomonas aeruginosa (strain LESB58), this protein is GTPase Obg.